A 214-amino-acid chain; its full sequence is Osteoclast-stimulating factor 1 (214 aa).

One can recognise an SH3 domain in the interval 12–71 (GQVKVYRALFTFDPRTPDELYFEEGDILYISDTSDSNWWKGTCRGRTGLIPSNYVAEQAE). ANK repeat units lie at residues 72–101 (SIDNPMHEAAKRGNLSWLRECLDNKVGING), 105–135 (AGNTSLYWACHGGHKDVVEILLSQPNCELNQ), and 139–168 (LGDTPLHAAAWKGYSDIVEMLLNKNARTDV).

The protein resides in the cytoplasm. Functionally, induces bone resorption, acting probably through a signaling cascade which results in the secretion of factor(s) enhancing osteoclast formation and activity. The protein is Osteoclast-stimulating factor 1 (ostf1) of Danio rerio (Zebrafish).